Here is a 366-residue protein sequence, read N- to C-terminus: Histone-lysine N-methyltransferase SETD7 (366 aa).

MORN repeat units lie at residues 36–58 (FEGNFVHGEKNGRGKFFFFDGST), 59–81 (LEGYYVDDALQGQGVYTYEDGGV), and 106–128 (FKGQYKDNIRHGVCWIYYPDGGS). The 123-residue stretch at 214-336 (ERVYVAESLI…ADEELTVAYG (123 aa)) folds into the SET domain. S-adenosyl-L-methionine is bound by residues 226–228 (AGE), asparagine 296, histidine 297, and glutamate 356.

Belongs to the class V-like SAM-binding methyltransferase superfamily. Histone-lysine methyltransferase family. SET7 subfamily. In terms of assembly, interacts with IPF1/PDX-1. As to expression, widely expressed. Expressed in pancreatic islets.

Its subcellular location is the nucleus. It is found in the chromosome. It carries out the reaction L-lysyl(4)-[histone H3] + S-adenosyl-L-methionine = N(6)-methyl-L-lysyl(4)-[histone H3] + S-adenosyl-L-homocysteine + H(+). The enzyme catalyses L-lysyl-[protein] + S-adenosyl-L-methionine = N(6)-methyl-L-lysyl-[protein] + S-adenosyl-L-homocysteine + H(+). Histone methyltransferase that specifically monomethylates 'Lys-4' of histone H3. H3 'Lys-4' methylation represents a specific tag for epigenetic transcriptional activation. Plays a central role in the transcriptional activation of genes such as collagenase or insulin. Recruited by IPF1/PDX-1 to the insulin promoter, leading to activate transcription. Also has methyltransferase activity toward non-histone proteins such as CGAS, p53/TP53, TAF10, and possibly TAF7 by recognizing and binding the [KR]-[STA]-K in substrate proteins. Monomethylates 'Lys-189' of TAF10, leading to increase the affinity of TAF10 for RNA polymerase II. Monomethylates 'Lys-372' of p53/TP53, stabilizing p53/TP53 and increasing p53/TP53-mediated transcriptional activation. Monomethylates 'Lys-491' of CGAS, promoting interaction between SGF29 and CGAS. In Homo sapiens (Human), this protein is Histone-lysine N-methyltransferase SETD7 (SETD7).